We begin with the raw amino-acid sequence, 293 residues long: Glycine--tRNA ligase alpha subunit (293 aa).

It belongs to the class-II aminoacyl-tRNA synthetase family. As to quaternary structure, tetramer of two alpha and two beta subunits.

It is found in the cytoplasm. The catalysed reaction is tRNA(Gly) + glycine + ATP = glycyl-tRNA(Gly) + AMP + diphosphate. This is Glycine--tRNA ligase alpha subunit from Sulfurimonas denitrificans (strain ATCC 33889 / DSM 1251) (Thiomicrospira denitrificans (strain ATCC 33889 / DSM 1251)).